Consider the following 255-residue polypeptide: Tail completion protein p143 (255 aa).

It localises to the virion. Putative role in tail stability. The protein is Tail completion protein p143 of Escherichia phage T5 (Enterobacteria phage T5).